An 854-amino-acid chain; its full sequence is Envelope glycoprotein B (854 aa).

The signal sequence occupies residues 1-30 (MSKNWFPLLCASVLVVYVSIASSSTGTASG). Residues 31–723 (AVTPTSPTEN…EGVVGFIKNP (693 aa)) lie on the Virion surface side of the membrane. N-linked (GlcNAc...) asparagine; by host glycosylation is found at N40, N48, and N60. Intrachain disulfides connect C69–C524, C86–C480, C160–C225, C317–C364, and C546–C583. The tract at residues 127–133 (SYSFIRE) is involved in fusion and/or binding to host membrane. N183 is a glycosylation site (N-linked (GlcNAc...) asparagine; by host). An involved in fusion and/or binding to host membrane region spans residues 212–219 (GSTWLYTT). N-linked (GlcNAc...) asparagine; by host glycosylation is found at N256, N275, N314, N356, N378, N382, N390, N423, N426, N442, N558, and N595. Hydrophobic membrane proximal region stretches follow at residues 669–721 (VEGK…GFIK) and 700–720 (VAIG…VGFI). The helical transmembrane segment at 724–744 (FGSFTVILFLLAVLGVIYLIY) threads the bilayer. At 745 to 854 (MRQKRAYEKP…YQKIQNEYEV (110 aa)) the chain is on the intravirion side.

This sequence belongs to the herpesviridae glycoprotein B family. Homotrimer; disulfide-linked. Binds to heparan sulfate proteoglycans. Interacts with gH/gL heterodimer. In terms of processing, a proteolytic cleavage by host furin generates two subunits that remain linked by disulfide bonds.

It localises to the virion membrane. The protein localises to the host cell membrane. The protein resides in the host endosome membrane. It is found in the host Golgi apparatus membrane. Functionally, envelope glycoprotein that forms spikes at the surface of virion envelope. Essential for the initial attachment to heparan sulfate moieties of the host cell surface proteoglycans. Involved in fusion of viral and cellular membranes leading to virus entry into the host cell. Following initial binding to its host receptors, membrane fusion is mediated by the fusion machinery composed at least of gB and the heterodimer gH/gL. May be involved in the fusion between the virion envelope and the outer nuclear membrane during virion egress. The protein is Envelope glycoprotein B of Macaca mulatta (Rhesus macaque).